Reading from the N-terminus, the 302-residue chain is Nudix hydrolase 5 (302 aa).

A Nudix hydrolase domain is found at 122–254 (SHRIGIGAFV…EGNEMFKLIA (133 aa)). The Nudix box motif lies at 159 to 180 (GTIKEGESIWAGAVREVKEETD). Mg(2+)-binding residues include E174 and E178.

It belongs to the Nudix hydrolase family. The cofactor is Mg(2+). Mn(2+) is required as a cofactor. Expressed in roots, stems and leaves.

Its function is as follows. Probably mediates the hydrolysis of some nucleoside diphosphate derivatives. In Arabidopsis thaliana (Mouse-ear cress), this protein is Nudix hydrolase 5 (NUDT5).